The primary structure comprises 550 residues: CTP synthase (550 aa).

Positions 1-270 are amidoligase domain; the sequence is MTKYVFVTGG…DNIVCEALGL (270 aa). CTP is bound at residue Ser13. Ser13 serves as a coordination point for UTP. ATP contacts are provided by residues 14-19 and Asp71; that span reads SLGKGI. The Mg(2+) site is built by Asp71 and Glu144. Residues 151–153, 191–196, and Lys227 contribute to the CTP site; these read DIE and KTKPTQ. UTP contacts are provided by residues 191–196 and Lys227; that span reads KTKPTQ. Residues 295–545 enclose the Glutamine amidotransferase type-1 domain; the sequence is TIGMVGKYVD…IRAALEHKAQ (251 aa). Position 356 (Gly356) interacts with L-glutamine. Cys383 functions as the Nucleophile; for glutamine hydrolysis in the catalytic mechanism. Residues 384 to 387 and Glu407 contribute to the L-glutamine site; that span reads LGMQ. The interval 430 to 459 is disordered; the sequence is VERRDNSSDLGGTMRKGAQRCPIRPGTRAQ. Arg473 lines the L-glutamine pocket. Residues His518 and Glu520 contribute to the active site.

It belongs to the CTP synthase family. Homotetramer.

It carries out the reaction UTP + L-glutamine + ATP + H2O = CTP + L-glutamate + ADP + phosphate + 2 H(+). The catalysed reaction is L-glutamine + H2O = L-glutamate + NH4(+). It catalyses the reaction UTP + NH4(+) + ATP = CTP + ADP + phosphate + 2 H(+). Its pathway is pyrimidine metabolism; CTP biosynthesis via de novo pathway; CTP from UDP: step 2/2. With respect to regulation, allosterically activated by GTP, when glutamine is the substrate; GTP has no effect on the reaction when ammonia is the substrate. The allosteric effector GTP functions by stabilizing the protein conformation that binds the tetrahedral intermediate(s) formed during glutamine hydrolysis. Inhibited by the product CTP, via allosteric rather than competitive inhibition. In terms of biological role, catalyzes the ATP-dependent amination of UTP to CTP with either L-glutamine or ammonia as the source of nitrogen. Regulates intracellular CTP levels through interactions with the four ribonucleotide triphosphates. This Bordetella parapertussis (strain 12822 / ATCC BAA-587 / NCTC 13253) protein is CTP synthase.